A 218-amino-acid polypeptide reads, in one-letter code: MTQDEMKKAAGWAALEYVEKDSIVGVGTGSTVNHFIDALATMKADIDGAVSSSEASTEKMKALGIPVYDLNSVDELSVYVDGADEINAHMDMIKGGGAALTREKIVAAVADKFICIVDNTKEVDVLGEFPLPVEVIPMARSYVARQLVKLGGDPVYREGVVTDNGNVILDVYNMKIMNPKELEEQINAIVGVVTNGLFAMRGADVLLVGSPEGVKTVK.

Residues 28-31, 81-84, and 94-97 contribute to the substrate site; these read TGST, DGAD, and KGGG. Residue E103 is the Proton acceptor of the active site. K121 contributes to the substrate binding site.

Belongs to the ribose 5-phosphate isomerase family. Homodimer.

It catalyses the reaction aldehydo-D-ribose 5-phosphate = D-ribulose 5-phosphate. Its pathway is carbohydrate degradation; pentose phosphate pathway; D-ribose 5-phosphate from D-ribulose 5-phosphate (non-oxidative stage): step 1/1. Functionally, catalyzes the reversible conversion of ribose-5-phosphate to ribulose 5-phosphate. The sequence is that of Ribose-5-phosphate isomerase A from Shewanella sediminis (strain HAW-EB3).